A 435-amino-acid polypeptide reads, in one-letter code: Mitochondrial association factor 1 form a1 (435 aa).

Residues 1 to 20 (MWRIWRCRLSFLFATGCLLG) form the signal peptide. The Vacuolar portion of the chain corresponds to 21-96 (ALTAGLGSQM…VTARRRRNRR (76 aa)). A helical membrane pass occupies residues 97 to 117 (IALIATAVGVAVILAALYVLR). Over 118–435 (RRRAQPPQEP…ERTYTFPQGD (318 aa)) the chain is Cytoplasmic. A disordered region spans residues 120-159 (RAQPPQEPEPPTRLRTPRPRAPSGQQQPSESEPPAGVPMT).

Interacts with host SAMM50.

The protein resides in the parasitophorous vacuole membrane. During host cell infection by tachyzoites, does not play a role in tethering the parasitophorous vacuole to the host mitochondria, probably because it does not bind host mitochondrial import protein TOMM70. The polypeptide is Mitochondrial association factor 1 form a1 (Toxoplasma gondii (strain ATCC 50611 / Me49)).